The sequence spans 280 residues: Formyltetrahydrofolate deformylase (280 aa).

In terms of domain architecture, ACT spans 8–86; that stretch reads VLRTICPDQK…RELNPAGRRR (79 aa). D225 is a catalytic residue.

The protein belongs to the PurU family.

It catalyses the reaction (6R)-10-formyltetrahydrofolate + H2O = (6S)-5,6,7,8-tetrahydrofolate + formate + H(+). It functions in the pathway purine metabolism; IMP biosynthesis via de novo pathway; formate from 10-formyl-5,6,7,8-tetrahydrofolate: step 1/1. Catalyzes the hydrolysis of 10-formyltetrahydrofolate (formyl-FH4) to formate and tetrahydrofolate (FH4). This Escherichia coli O6:H1 (strain CFT073 / ATCC 700928 / UPEC) protein is Formyltetrahydrofolate deformylase.